We begin with the raw amino-acid sequence, 131 residues long: Squamosa promoter-binding-like protein 3 (131 aa).

The span at 1–17 (MSMRRSKAEGKRSLREL) shows a compositional bias: basic and acidic residues. The disordered stretch occupies residues 1 to 54 (MSMRRSKAEGKRSLRELSEEEEEEEETEDEDTFEEEEALEKKQKGKATSSSGVC). Residues 18–38 (SEEEEEEEETEDEDTFEEEEA) show a composition bias toward acidic residues. Residues 45–129 (GKATSSSGVC…GHNERRRKST (85 aa)) form a sufficient and necessary for DNA binding region. The SBP-type zinc finger occupies 51–128 (SGVCQVESCT…AGHNERRRKS (78 aa)). Zn(2+)-binding residues include C54, C59, C76, H79, C95, C98, H102, and C114. Positions 111-127 (KRSCRRRLAGHNERRRK) match the Bipartite nuclear localization signal motif.

It depends on Zn(2+) as a cofactor. Expressed in vegetative and inflorescence apical meristems, floral meristems, leaf and flower organ primordia, inflorescence stem tissue and to lower extent in roots.

It localises to the nucleus. The protein localises to the cytoplasm. Functionally, trans-acting factor that binds specifically to the consensus nucleotide sequence 5'-TNCGTACAA-3' of AP1 promoter. Binds specifically to the 5'-GTAC-3' core sequence. Promotes both vegetative phase change and flowering. Regulates phase-specific patterns of leaf epidermal differentiation and flowering time, but does not seem to affect leaf shape. This Arabidopsis thaliana (Mouse-ear cress) protein is Squamosa promoter-binding-like protein 3 (SPL3).